Here is a 162-residue protein sequence, read N- to C-terminus: Anaerobic nitrite reductase NSHB2 (162 aa).

The 144-residue stretch at 16-159 folds into the Globin domain; the sequence is SFSEEQEALV…LVAAIKQEMK (144 aa). A Homodimerization motif is present at residues 49–53; it reads EVAPS. The heme b site is built by Ser59, Lys73, His77, Arg100, Thr104, and His105. The Homodimerization signature appears at 112-124; sequence DAHFEVTRFALLE.

It belongs to the plant globin family. Homodimer. Requires heme b as cofactor. As to expression, mainly expressed in germinating seeds, seedlings, roots, flowers and leaves.

It localises to the cytoplasm. The protein resides in the nucleus. The enzyme catalyses Fe(III)-heme b-[protein] + nitric oxide + H2O = Fe(II)-heme b-[protein] + nitrite + 2 H(+). In terms of biological role, phytoglobin that reduces nitrite to nitric oxide under anoxic conditions (e.g. during flooding or in waterlogged soil). May not function as an oxygen storage or transport protein. Has an unusually high affinity for O(2) through an hexacoordinate heme iron because of a very low dissociation constant. Promotes tolerance to low potassium K(+) conditions. This chain is Anaerobic nitrite reductase NSHB2, found in Oryza sativa subsp. indica (Rice).